Here is a 142-residue protein sequence, read N- to C-terminus: Large ribosomal subunit protein uL11 (142 aa).

It belongs to the universal ribosomal protein uL11 family. In terms of assembly, part of the ribosomal stalk of the 50S ribosomal subunit. Interacts with L10 and the large rRNA to form the base of the stalk. L10 forms an elongated spine to which L12 dimers bind in a sequential fashion forming a multimeric L10(L12)X complex. One or more lysine residues are methylated.

Functionally, forms part of the ribosomal stalk which helps the ribosome interact with GTP-bound translation factors. The chain is Large ribosomal subunit protein uL11 from Rhodopseudomonas palustris (strain HaA2).